We begin with the raw amino-acid sequence, 259 residues long: UPF0246 protein PputGB1_4560 (259 aa).

The protein belongs to the UPF0246 family.

The chain is UPF0246 protein PputGB1_4560 from Pseudomonas putida (strain GB-1).